The chain runs to 412 residues: DnaJ homolog subfamily A member 2 (412 aa).

The region spanning 8 to 70 is the J domain; it reads KLYDILGVPP…EKRELYDRYG (63 aa). An N6-acetyllysine modification is found at K39. S78 and S123 each carry phosphoserine. The CR-type zinc finger occupies 130 to 214; it reads GKTTKLQLSK…CEGKKVIKEV (85 aa). A Glycyl lysine isopeptide (Lys-Gly) (interchain with G-Cter in SUMO2) cross-link involves residue K134. Zn(2+) contacts are provided by C143 and C146. A CXXCXGXG motif repeat occupies 143-150; that stretch reads CSACSGQG. The residue at position 152 (K152) is an N6-acetyllysine. C159, C162, C186, C189, C202, and C205 together coordinate Zn(2+). CXXCXGXG motif repeat units lie at residues 159-166, 186-193, and 202-209; these read CSACRGRG, CSDCNGEG, and CKKCEGKK. The disordered stretch occupies residues 365–412; that stretch reads IGETEEVELQEFDSTRGSGGGQRREAYNDSSDEESSSHHGPGVQCAHQ. A Phosphotyrosine modification is found at Y391. Phosphoserine occurs at positions 394 and 395. A Cysteine methyl ester modification is found at C409. Residue C409 is the site of S-farnesyl cysteine attachment. The propeptide at 410-412 is removed in mature form; sequence AHQ.

The protein localises to the membrane. Its function is as follows. Co-chaperone of Hsc70. Stimulates ATP hydrolysis and the folding of unfolded proteins mediated by HSPA1A/B (in vitro). In Rattus norvegicus (Rat), this protein is DnaJ homolog subfamily A member 2 (Dnaja2).